A 438-amino-acid polypeptide reads, in one-letter code: MRVDEFLKERNINVGDFVRITKEEDGEEVTYEGYIMPPYELSAGDTLVLKLENGYNIGIALEKIRRIEVLERAKVKPEVHFEALIEGKPGLPEVTIIGTGGTIASRIDYETGAVYPAFTAEELAKAVPEIFEVANVKPKLLFNIFSEDMKPKHWVKIAHEVAKALNSGDYGVVVAHGTDTMGYTAAALSFMLRNLGKPVVLVGAQRSSDRPSSDAAMNLICSVRMATSEVAEVMVVMHGETGDTYCLAHRGTKVRKMHTSRRDAFRSINDVPIAKIWPNGEIEFLRKDYRKRSDEEVEVDDKIEEKVALVKVYPGISSEIIDFLVDKGYKGIVIEGTGLGHTPNDIIPSIERAVEEGVAVCMTSQCIYGRVNLNVYSTGRKLLKAGVIPCEDMLPETAYVKLMWVLGHTQNLEEVRKMMLTNYAGEITPYTRFDTYLR.

Residues 92 to 422 (PEVTIIGTGG…EEVRKMMLTN (331 aa)) enclose the Asparaginase/glutaminase domain. Catalysis depends on residues Thr102, Thr178, Asp179, and Lys256.

Belongs to the asparaginase 1 family. GatD subfamily. Heterodimer of GatD and GatE.

The catalysed reaction is L-glutamyl-tRNA(Gln) + L-glutamine + ATP + H2O = L-glutaminyl-tRNA(Gln) + L-glutamate + ADP + phosphate + H(+). In terms of biological role, allows the formation of correctly charged Gln-tRNA(Gln) through the transamidation of misacylated Glu-tRNA(Gln) in organisms which lack glutaminyl-tRNA synthetase. The reaction takes place in the presence of glutamine and ATP through an activated gamma-phospho-Glu-tRNA(Gln). The GatDE system is specific for glutamate and does not act on aspartate. The protein is Glutamyl-tRNA(Gln) amidotransferase subunit D of Pyrococcus abyssi (strain GE5 / Orsay).